Here is a 513-residue protein sequence, read N- to C-terminus: ATP synthase subunit alpha 2 (513 aa).

ATP is bound at residue Gly169–Thr176.

Belongs to the ATPase alpha/beta chains family. F-type ATPases have 2 components, CF(1) - the catalytic core - and CF(0) - the membrane proton channel. CF(1) has five subunits: alpha(3), beta(3), gamma(1), delta(1), epsilon(1). CF(0) has three main subunits: a(1), b(2) and c(9-12). The alpha and beta chains form an alternating ring which encloses part of the gamma chain. CF(1) is attached to CF(0) by a central stalk formed by the gamma and epsilon chains, while a peripheral stalk is formed by the delta and b chains.

Its subcellular location is the cell inner membrane. The catalysed reaction is ATP + H2O + 4 H(+)(in) = ADP + phosphate + 5 H(+)(out). In terms of biological role, produces ATP from ADP in the presence of a proton gradient across the membrane. The alpha chain is a regulatory subunit. This Pseudoalteromonas atlantica (strain T6c / ATCC BAA-1087) protein is ATP synthase subunit alpha 2.